A 91-amino-acid chain; its full sequence is Small ribosomal subunit protein bS16 (91 aa).

It belongs to the bacterial ribosomal protein bS16 family.

This Limosilactobacillus reuteri (strain DSM 20016) (Lactobacillus reuteri) protein is Small ribosomal subunit protein bS16.